We begin with the raw amino-acid sequence, 50 residues long: Sperm protamine P1 (50 aa).

Belongs to the protamine P1 family. In terms of tissue distribution, testis.

Its subcellular location is the nucleus. It localises to the chromosome. Functionally, protamines substitute for histones in the chromatin of sperm during the haploid phase of spermatogenesis. They compact sperm DNA into a highly condensed, stable and inactive complex. This is Sperm protamine P1 (PRM1) from Chilonatalus micropus (Cuban funnel-eared bat).